A 1651-amino-acid chain; its full sequence is Roundabout homolog 1 (1651 aa).

The N-terminal stretch at 1 to 25 is a signal peptide; the sequence is MKWKHVPFLVMISLLSLSPNHLFLA. Residues 26 to 897 lie on the Extracellular side of the membrane; it reads QLIPDPEDVE…QQISDVVKQP (872 aa). A disordered region spans residues 33–57; sequence DVERGNDHGTPIPTSDNDDNSLGYT. Residues 44–56 are compositionally biased toward polar residues; it reads IPTSDNDDNSLGY. 5 Ig-like C2-type domains span residues 68–164, 170–257, 262–346, 351–446, and 455–541; these read PRIV…ASLE, DDFR…AELT, PSFV…ATLT, PHFV…LEVT, and PVIR…AYIE. Residues C89 and C147 are joined by a disulfide bond. N160 carries N-linked (GlcNAc...) asparagine glycosylation. 3 disulfide bridges follow: C191/C240, C283/C330, and C372/C428. A glycan (N-linked (GlcNAc...) asparagine) is linked at N463. A disulfide bridge connects residues C476 and C525. Fibronectin type-III domains lie at 563–657, 676–773, and 778–874; these read APSK…TQDV, AVLH…TLEE, and PPQG…LDAH. N-linked (GlcNAc...) asparagine glycans are attached at residues N790, N820, and N827. A helical transmembrane segment spans residues 898–918; the sequence is AFIAGIGAACWIILMVFSIWL. At 919–1651 the chain is on the cytoplasmic side; it reads YRHRKKRNGL…NNEELEETES (733 aa). S940 is modified (phosphoserine). T948 carries the post-translational modification Phosphothreonine. Phosphotyrosine; by ABL; in vitro is present on Y1038. S1055 is modified (phosphoserine). Residues Y1073 and Y1114 each carry the phosphotyrosine; by ABL; in vitro modification. 4 disordered regions span residues 1124–1202, 1224–1337, 1352–1397, and 1420–1651; these read KDYR…SEEY, YLQQ…ADME, EQTP…DGSF, and RRQM…ETES. Residues 1137 to 1146 are compositionally biased toward polar residues; that stretch reads PYNQSYDQNT. Residues 1147–1163 are compositionally biased toward low complexity; the sequence is GGSYNSSDRGSSTSGSQ. Positions 1186 to 1196 are enriched in pro residues; the sequence is LPPPPAHPPPH. T1240 is modified (phosphothreonine). Residues 1255 to 1269 show a composition bias toward polar residues; the sequence is YSHQSTATLTPSPQE. Positions 1281–1293 are enriched in basic and acidic residues; that stretch reads ETGHMQHQPDRRR. Pro residues predominate over residues 1296-1307; sequence VSPPPPPRPISP. S1297 carries the phosphoserine modification. Positions 1322-1336 are enriched in acidic residues; the sequence is MDTDAPEEEEDEADM. Positions 1384–1397 are enriched in low complexity; sequence SSGRSSVSSSDGSF. A compositionally biased stretch (polar residues) spans 1438-1451; it reads PRPTSPVSTDSNMS. The segment covering 1459–1470 has biased composition (basic residues); that stretch reads RPAKKLKHQPGH. Residues 1480-1490 show a composition bias toward pro residues; it reads LPPPPVPPPAI. Composition is skewed to basic and acidic residues over residues 1516-1541 and 1549-1573; these read ARTD…RQVV and DPRE…RDLP. Polar residues predominate over residues 1592–1601; sequence FPTSNNPRDP. The segment covering 1602 to 1614 has biased composition (low complexity); the sequence is SSSSSMSSRGSGS. Positions 1642–1651 are enriched in acidic residues; sequence NNEELEETES.

Belongs to the immunoglobulin superfamily. ROBO family. As to quaternary structure, homodimer. Dimerization is mediated by the extracellular domain and is independent of SLIT liganding. Interacts with SLIT1. Interacts with SLIT2. Interacts with FLRT3. Interacts with MYO9B (via Rho-GAP domain). In terms of processing, ubiquitinated. May be deubiquitinated by USP33. In terms of tissue distribution, widely expressed, with exception of kidney.

Its subcellular location is the cell membrane. It localises to the cell projection. The protein localises to the axon. The protein resides in the endoplasmic reticulum-Golgi intermediate compartment membrane. Functionally, receptor for SLIT1 and SLIT2 that mediates cellular responses to molecular guidance cues in cellular migration, including axonal navigation at the ventral midline of the neural tube and projection of axons to different regions during neuronal development. Interaction with the intracellular domain of FLRT3 mediates axon attraction towards cells expressing NTN1. In axon growth cones, the silencing of the attractive effect of NTN1 by SLIT2 may require the formation of a ROBO1-DCC complex. Plays a role in the regulation of cell migration via its interaction with MYO9B; inhibits MYO9B-mediated stimulation of RHOA GTPase activity, and thereby leads to increased levels of active, GTP-bound RHOA. May be required for lung development. This Homo sapiens (Human) protein is Roundabout homolog 1 (ROBO1).